The primary structure comprises 419 residues: Glutamyl-tRNA reductase (419 aa).

Substrate-binding positions include 49–52 (TCNR), serine 107, 112–114 (EPQ), and glutamine 118. The active-site Nucleophile is cysteine 50. Position 187 to 192 (187 to 192 (GAGETI)) interacts with NADP(+).

It belongs to the glutamyl-tRNA reductase family. Homodimer.

The catalysed reaction is (S)-4-amino-5-oxopentanoate + tRNA(Glu) + NADP(+) = L-glutamyl-tRNA(Glu) + NADPH + H(+). The protein operates within porphyrin-containing compound metabolism; protoporphyrin-IX biosynthesis; 5-aminolevulinate from L-glutamyl-tRNA(Glu): step 1/2. Its function is as follows. Catalyzes the NADPH-dependent reduction of glutamyl-tRNA(Glu) to glutamate 1-semialdehyde (GSA). The protein is Glutamyl-tRNA reductase of Vibrio atlanticus (strain LGP32) (Vibrio splendidus (strain Mel32)).